The chain runs to 397 residues: tRNA-specific 2-thiouridylase MnmA (397 aa).

Residues 19–26 (AMSGGVDS) and Leu-45 contribute to the ATP site. Cys-113 (nucleophile) is an active-site residue. Cys-113 and Cys-210 are oxidised to a cystine. Residue Gly-137 participates in ATP binding. The tract at residues 160 to 162 (RDQ) is interaction with tRNA. Cys-210 (cysteine persulfide intermediate) is an active-site residue.

Belongs to the MnmA/TRMU family.

It is found in the cytoplasm. The enzyme catalyses S-sulfanyl-L-cysteinyl-[protein] + uridine(34) in tRNA + AH2 + ATP = 2-thiouridine(34) in tRNA + L-cysteinyl-[protein] + A + AMP + diphosphate + H(+). Functionally, catalyzes the 2-thiolation of uridine at the wobble position (U34) of tRNA, leading to the formation of s(2)U34. This is tRNA-specific 2-thiouridylase MnmA from Rhodopseudomonas palustris (strain ATCC BAA-98 / CGA009).